Here is a 962-residue protein sequence, read N- to C-terminus: Glutamate receptor 1 (962 aa).

The N-terminal stretch at 1–25 is a signal peptide; it reads MFSSFSFLNMFGVLFTVFNLTVVQP. Residues 26-591 are Extracellular-facing; it reads YPSHIIIKSF…SVFSFMQPLS (566 aa). N-linked (GlcNAc...) asparagine glycosylation is found at asparagine 190, asparagine 220, asparagine 275, asparagine 333, asparagine 441, and asparagine 482. Residues 592-612 traverse the membrane as a helical segment; sequence TEIWMYIIFAYIGVSVVIFLV. The Cytoplasmic portion of the chain corresponds to 613–668; sequence SRFSPYEWRVEETSRGGFTISNDFSVYNCLWFTLAAFMQQGTDILPRSISGRIASS. The helical transmembrane segment at 669 to 689 threads the bilayer; the sequence is AWWFFTMIIVSSYTANLAAFL. Topologically, residues 690–855 are extracellular; the sequence is TLEKMQAPIE…GSSASLNLSK (166 aa). Residue asparagine 852 is glycosylated (N-linked (GlcNAc...) asparagine). Residues 856–876 traverse the membrane as a helical segment; the sequence is VAGIFYILMGGMVISMLAALG. Topologically, residues 877–962 are cytoplasmic; that stretch reads EFLYRSRIEA…PANTLYNTAV (86 aa).

The protein belongs to the glutamate-gated ion channel (TC 1.A.10.1) family. In terms of assembly, interacts with sol-1. Interacts with cni-1; the interaction negatively regulates export of glr-1 from the endoplasmic reticulum to synapses. Interacts with usp-46; the interaction results in deubiquitination of glr-1. In terms of processing, ubiquitinated. Deubiquitinated by usp-46 which prevents its degradation. Glycosylated. As to expression, command interneurons of the locomotory control circuit (AIB, AVA, AVB, AVD, AVE and PVC) and motor neurons (RMD, RIM, SMD, AVG, PVQ and URY).

It is found in the postsynaptic cell membrane. The protein resides in the endoplasmic reticulum. It localises to the synapse. Its subcellular location is the cell membrane. The protein localises to the recycling endosome. It is found in the cell projection. The protein resides in the dendrite. It localises to the perikaryon. Non-NMDA (N-methyl-D-aspartate) ionotropic glutamate receptor. L-glutamate acts as an excitatory neurotransmitter at many synapses in the central nervous system. The postsynaptic actions of glutamate are mediated by a variety of receptors that are named according to their selective agonists. May contribute to a sensory discrimination between mechanical and chemical stimuli. Plays a role in controlling movement in response to environmental cues such as food availability and mechanosensory stimulation such as the nose touch response. In AIB interneurons, promotes omega turns, a movement that frequently follows backwards locomotion or 'reversals' in response to environmental cues while possibly playing an inhibitory role in alternative neurons to inhibit omega turns. In Caenorhabditis elegans, this protein is Glutamate receptor 1.